Here is a 597-residue protein sequence, read N- to C-terminus: Fructan 1-exohydrolase w1 (597 aa).

Residues 1–20 (MAQAWAFLLPVLVFGSYVTS) form the signal peptide. Aspartate 76 is a catalytic residue. N-linked (GlcNAc...) asparagine glycosylation is found at asparagine 169, asparagine 237, and asparagine 249. The cysteines at positions 447 and 493 are disulfide-linked. N-linked (GlcNAc...) asparagine glycosylation occurs at asparagine 568.

This sequence belongs to the glycosyl hydrolase 32 family.

The catalysed reaction is Hydrolysis of terminal, non-reducing (2-&gt;1)-linked beta-D-fructofuranose residues in fructans.. Its activity is regulated as follows. Inhibited by sucrose. Functionally, hydrolyzes inulin-type beta-(2,1)-fructans and beta-(2,1)-linkages in branched fructans. Has low activity against beta-(2,6)-linked fructans. May play a role as a beta-(2,1)-trimmer during graminan biosynthesis. In Triticum aestivum (Wheat), this protein is Fructan 1-exohydrolase w1.